Here is a 189-residue protein sequence, read N- to C-terminus: MIPPVILASQSPRRRELLEKTGIPFSIIVRDTEELKEASMPPQELCLHNAAAKAEAVFREHPDSTVIGADTLVFLEGFPLGKPEDEEEARSMLRKLSGRTHHVCTAVAIRSPLGMKNLAVLTEVTFRELTEKDIRHYMELVDVMDKAGSYAFQEHGEMIISSVRGDTDNVIGLPVRDVMKCLNGLGYRA.

D70 acts as the Proton acceptor in catalysis.

The protein belongs to the Maf family. YhdE subfamily. A divalent metal cation is required as a cofactor.

Its subcellular location is the cytoplasm. The enzyme catalyses dTTP + H2O = dTMP + diphosphate + H(+). It carries out the reaction UTP + H2O = UMP + diphosphate + H(+). Nucleoside triphosphate pyrophosphatase that hydrolyzes dTTP and UTP. May have a dual role in cell division arrest and in preventing the incorporation of modified nucleotides into cellular nucleic acids. This is dTTP/UTP pyrophosphatase from Akkermansia muciniphila (strain ATCC BAA-835 / DSM 22959 / JCM 33894 / BCRC 81048 / CCUG 64013 / CIP 107961 / Muc).